Consider the following 557-residue polypeptide: Potassium-transporting ATPase potassium-binding subunit (557 aa).

The next 12 membrane-spanning stretches (helical) occupy residues 5 to 25 (GFLL…PLGS), 63 to 83 (LCAI…MLLG), 132 to 152 (GLTV…FALI), 170 to 190 (LLRI…LFFI), 253 to 273 (FVQM…FGEV), 283 to 303 (LLWA…WAEV), 329 to 349 (VLVS…AVIA), 356 to 376 (ALGG…FGGV), 379 to 399 (GLYG…LMIG), 416 to 436 (LTAL…ALAM), 484 to 504 (LLAF…MAIA), and 526 to 546 (LFVG…FIPA).

This sequence belongs to the KdpA family. The system is composed of three essential subunits: KdpA, KdpB and KdpC.

Its subcellular location is the cell inner membrane. Part of the high-affinity ATP-driven potassium transport (or Kdp) system, which catalyzes the hydrolysis of ATP coupled with the electrogenic transport of potassium into the cytoplasm. This subunit binds the periplasmic potassium ions and delivers the ions to the membrane domain of KdpB through an intramembrane tunnel. This chain is Potassium-transporting ATPase potassium-binding subunit, found in Escherichia coli (strain SE11).